Reading from the N-terminus, the 336-residue chain is UDP-galactose transporter 1 (336 aa).

A run of 9 helical transmembrane segments spans residues 11-31, 38-58, 83-103, 131-151, 154-174, 193-213, 227-247, 254-274, and 278-298; these read LAIL…KWIF, FPLS…YIVI, FVFC…PVSF, IWAS…TELS, MFGF…TILA, APFA…SGIL, IIIL…FYVI, TFNV…WLIF, and ISYM…FYGY.

The protein belongs to the TPT transporter family. TPT (TC 2.A.7.9) subfamily.

Its subcellular location is the membrane. In terms of biological role, nucleotide sugar transporter that specifically transports UDP-galactose. In Arabidopsis thaliana (Mouse-ear cress), this protein is UDP-galactose transporter 1.